We begin with the raw amino-acid sequence, 87 residues long: Exodeoxyribonuclease 7 small subunit (87 aa).

The protein belongs to the XseB family. In terms of assembly, heterooligomer composed of large and small subunits.

It localises to the cytoplasm. The enzyme catalyses Exonucleolytic cleavage in either 5'- to 3'- or 3'- to 5'-direction to yield nucleoside 5'-phosphates.. Its function is as follows. Bidirectionally degrades single-stranded DNA into large acid-insoluble oligonucleotides, which are then degraded further into small acid-soluble oligonucleotides. This is Exodeoxyribonuclease 7 small subunit from Halorhodospira halophila (strain DSM 244 / SL1) (Ectothiorhodospira halophila (strain DSM 244 / SL1)).